The chain runs to 599 residues: Elongation factor 4 (599 aa).

One can recognise a tr-type G domain in the interval 4–186 (ENIRNFSIIA…EIVKKIPPPE (183 aa)). GTP is bound by residues 16 to 21 (DHGKST) and 133 to 136 (NKID).

Belongs to the TRAFAC class translation factor GTPase superfamily. Classic translation factor GTPase family. LepA subfamily.

It is found in the cell inner membrane. It catalyses the reaction GTP + H2O = GDP + phosphate + H(+). Its function is as follows. Required for accurate and efficient protein synthesis under certain stress conditions. May act as a fidelity factor of the translation reaction, by catalyzing a one-codon backward translocation of tRNAs on improperly translocated ribosomes. Back-translocation proceeds from a post-translocation (POST) complex to a pre-translocation (PRE) complex, thus giving elongation factor G a second chance to translocate the tRNAs correctly. Binds to ribosomes in a GTP-dependent manner. The protein is Elongation factor 4 of Geobacter metallireducens (strain ATCC 53774 / DSM 7210 / GS-15).